The chain runs to 213 residues: Orotate phosphoribosyltransferase (213 aa).

K26 contacts 5-phospho-alpha-D-ribose 1-diphosphate. 34–35 contacts orotate; the sequence is FF. 5-phospho-alpha-D-ribose 1-diphosphate contacts are provided by residues 72–73, R99, K100, K103, H105, and 124–132; these read YK and DDVITAGTA. The orotate site is built by T128 and R156.

Belongs to the purine/pyrimidine phosphoribosyltransferase family. PyrE subfamily. In terms of assembly, homodimer. Requires Mg(2+) as cofactor.

It carries out the reaction orotidine 5'-phosphate + diphosphate = orotate + 5-phospho-alpha-D-ribose 1-diphosphate. It participates in pyrimidine metabolism; UMP biosynthesis via de novo pathway; UMP from orotate: step 1/2. Its function is as follows. Catalyzes the transfer of a ribosyl phosphate group from 5-phosphoribose 1-diphosphate to orotate, leading to the formation of orotidine monophosphate (OMP). The polypeptide is Orotate phosphoribosyltransferase (Cronobacter sakazakii (strain ATCC BAA-894) (Enterobacter sakazakii)).